We begin with the raw amino-acid sequence, 130 residues long: S-adenosylmethionine decarboxylase proenzyme (130 aa).

Ser-64 serves as the catalytic Schiff-base intermediate with substrate; via pyruvic acid. Pyruvic acid (Ser); by autocatalysis is present on Ser-64. Catalysis depends on His-69, which acts as the Proton acceptor; for processing activity. Cys-84 serves as the catalytic Proton donor; for catalytic activity.

The protein belongs to the prokaryotic AdoMetDC family. Type 1 subfamily. In terms of assembly, heterotetramer of two alpha and two beta chains arranged as a dimer of alpha/beta heterodimers. Pyruvate is required as a cofactor. Is synthesized initially as an inactive proenzyme. Formation of the active enzyme involves a self-maturation process in which the active site pyruvoyl group is generated from an internal serine residue via an autocatalytic post-translational modification. Two non-identical subunits are generated from the proenzyme in this reaction, and the pyruvate is formed at the N-terminus of the alpha chain, which is derived from the carboxyl end of the proenzyme. The post-translation cleavage follows an unusual pathway, termed non-hydrolytic serinolysis, in which the side chain hydroxyl group of the serine supplies its oxygen atom to form the C-terminus of the beta chain, while the remainder of the serine residue undergoes an oxidative deamination to produce ammonia and the pyruvoyl group blocking the N-terminus of the alpha chain.

It catalyses the reaction S-adenosyl-L-methionine + H(+) = S-adenosyl 3-(methylsulfanyl)propylamine + CO2. It functions in the pathway amine and polyamine biosynthesis; S-adenosylmethioninamine biosynthesis; S-adenosylmethioninamine from S-adenosyl-L-methionine: step 1/1. Functionally, catalyzes the decarboxylation of S-adenosylmethionine to S-adenosylmethioninamine (dcAdoMet), the propylamine donor required for the synthesis of the polyamines spermine and spermidine from the diamine putrescine. This chain is S-adenosylmethionine decarboxylase proenzyme, found in Picrophilus torridus (strain ATCC 700027 / DSM 9790 / JCM 10055 / NBRC 100828 / KAW 2/3).